The primary structure comprises 1013 residues: MQTSFHKFFLSMILAYSCCSLSGGGYAAEIMIPQGIYDGETLTVSFPYTVIGDPSGTTVFSAGELTLKNLDNSIAALPLSCFGNLLGSFTVLGRGHSLTFENIRTSTNGAALSDSANSGLFTIEGFKELSFSNCNSLLAVLPAATTNNGSQTPTTTSTPSNGTIYSKTDLLLLNNEKFSFYSNLVSGDGGAIDAKSLTVQGISKLCVFQENTAQADGGACQVVTSFSAMANEAPIAFIANVAGVRGGGIAAVQDGQQGVSSSTSTEDPVVSFSRNTAVEFDGNVARVGGGIYSYGNVAFLNNGKTLFLNNVASPVYIAAEQPTNGQASNTSDNYGDGGAIFCKNGAQAAGSNNSGSVSFDGEGVVFFSSNVAAGKGGAIYAKKLSVANCGPVQFLGNIANDGGAIYLGESGELSLSADYGDIIFDGNLKRTAKENAADVNGVTVSSQAISMGSGGKITTLRAKAGHQILFNDPIEMANGNNQPAQSSEPLKINDGEGYTGDIVFANGNSTLYQNVTIEQGRIVLREKAKLSVNSLSQTGGSLYMEAGSTLDFVTPQPPQQPPAANQLITLSNLHLSLSSLLANNAVTNPPTNPPAQDSHPAIIGSTTAGSVTISGPIFFEDLDDTAYDRYDWLGSNQKIDVLKLQLGTQPSANAPSDLTLGNEMPKYGYQGSWKLAWDPNTANNGPYTLKATWTKTGYNPGPERVASLVPNSLWGSILDIRSAHSAIQASVDGRSYCRGLWVSGVSNFFYHDRDALGQGYRYISGGYSLGANSYFGSSMFGLAFTEVFGRSKDYVVCRSNHHACIGSVYLSTKQALCGSYLFGDAFIRASYGFGNQHMKTSYTFAEESDVRWDNNCLVGEIGVGLPIVITPSKLYLNELRPFVQAEFSYADHESFTEEGDQARAFRSGHLMNLSVPVGVKFDRCSSTHPNKYSFMGAYICDAYRTISGTQTTLLSHQETWTTDAFHLARHGVIVRGSMYASLTSNIEVYGHGRYEYRDTSRGYGLSAGSKVRF.

The N-terminal stretch at 1 to 27 is a signal peptide; it reads MQTSFHKFFLSMILAYSCCSLSGGGYA. In terms of domain architecture, Autotransporter spans 733 to 1013; that stretch reads GRSYCRGLWV…GLSAGSKVRF (281 aa).

It belongs to the PMP outer membrane protein family.

It is found in the secreted. The protein resides in the cell wall. Its subcellular location is the cell outer membrane. This is Probable outer membrane protein PmpG (pmpG) from Chlamydia trachomatis serovar D (strain ATCC VR-885 / DSM 19411 / UW-3/Cx).